Consider the following 575-residue polypeptide: Transcription factor ncaA (575 aa).

2 stretches are compositionally biased toward polar residues: residues 1–15 (MAET…TPEN) and 22–34 (DNQS…SKNP). Disordered stretches follow at residues 1–40 (MAET…VKDR) and 79–114 (IRSG…AGGE). The UBZ4-type; degenerate zinc finger occupies 39 to 66 (DRKCQYCHQAFTSSSLGRHLDQYLFKKK). The span at 93-102 (GKRDTPERAM) shows a compositional bias: basic and acidic residues. Positions 337–371 (FAREVEKRKTLDEQLARVQQEANQLRAQVEKLGSC) form a coiled coil. The interval 429–575 (GRVGVGYGNP…ASGPPPSSGA (147 aa)) is disordered. Over residues 440–454 (LDDRSSADTKARATE) the composition is skewed to basic and acidic residues. The segment covering 455–471 (EPPASAALASTSTSAPP) has biased composition (low complexity). Residues 472–485 (SAHPPPRALQPAPG) are compositionally biased toward pro residues. Composition is skewed to polar residues over residues 493–513 (DQSS…TSPY) and 538–558 (SAAN…HQSL).

Interacts with atrR.

The protein resides in the nucleus. In terms of biological role, transcription factor required for normal voriconazole resistance. Contributes to the function of atrR and regulates the expression of the atrR target gene abcG1. This chain is Transcription factor ncaA, found in Aspergillus fumigatus (strain ATCC MYA-4609 / CBS 101355 / FGSC A1100 / Af293) (Neosartorya fumigata).